The following is a 120-amino-acid chain: NAD(P)H-quinone oxidoreductase subunit 3 (120 aa).

Transmembrane regions (helical) follow at residues 10–30 (LLVF…ASAL), 64–84 (MFAL…PWAV), and 89–109 (LGLL…VGLV).

This sequence belongs to the complex I subunit 3 family. NDH-1 can be composed of about 15 different subunits; different subcomplexes with different compositions have been identified which probably have different functions.

The protein resides in the cellular thylakoid membrane. The catalysed reaction is a plastoquinone + NADH + (n+1) H(+)(in) = a plastoquinol + NAD(+) + n H(+)(out). The enzyme catalyses a plastoquinone + NADPH + (n+1) H(+)(in) = a plastoquinol + NADP(+) + n H(+)(out). Functionally, NDH-1 shuttles electrons from an unknown electron donor, via FMN and iron-sulfur (Fe-S) centers, to quinones in the respiratory and/or the photosynthetic chain. The immediate electron acceptor for the enzyme in this species is believed to be plastoquinone. Couples the redox reaction to proton translocation, and thus conserves the redox energy in a proton gradient. Cyanobacterial NDH-1 also plays a role in inorganic carbon-concentration. The polypeptide is NAD(P)H-quinone oxidoreductase subunit 3 (Synechococcus sp. (strain JA-2-3B'a(2-13)) (Cyanobacteria bacterium Yellowstone B-Prime)).